Here is a 456-residue protein sequence, read N- to C-terminus: Cyclic AMP-responsive element-binding protein 3-like protein 3 (456 aa).

Disordered regions lie at residues 1 to 20 (MDGD…MGPI) and 47 to 120 (GHGE…KGPC). Topologically, residues 1-317 (MDGDLAIGKM…STSKSAQTGT (317 aa)) are cytoplasmic. The span at 71–85 (DSDSPTWSPAASDSG) shows a compositional bias: polar residues. Positions 238 to 301 (MLKKIRRKIR…LSLLEQLKKL (64 aa)) constitute a bZIP domain. Residues 240 to 269 (KKIRRKIRNKQSAQESRKKKKEYIDGLETR) form a basic motif region. Residues 280–301 (LQRKVLHLEKQNLSLLEQLKKL) form a leucine-zipper region. K289 participates in a covalent cross-link: Glycyl lysine isopeptide (Lys-Gly) (interchain with G-Cter in ubiquitin). The helical; Signal-anchor for type II membrane protein transmembrane segment at 318–338 (CIAVLLFSFALIVLPSISPFA) threads the bilayer. The Lumenal segment spans residues 339–456 (SNRAESPGDF…VGLEAAGGEL (118 aa)). Disordered stretches follow at residues 365–423 (RVAP…QGNS) and 435–456 (CAPP…GGEL). Residues N408 and N415 are each glycosylated (N-linked (GlcNAc...) asparagine).

It belongs to the bZIP family. ATF subfamily. Binds DNA as a dimer. May form homodimers. Interacts with ATF6. Interacts with SYNV1/HRD1; this interaction leads to CREB3L3 ubiquitination and proteasomal degradation. Post-translationally, controlled by regulated intramembrane proteolysis (RIP). Following ER stress a fragment containing the cytoplasmic transcription factor domain is released by proteolysis. The cleavage seems to be performed sequentially by site-1 and site-2 proteases (PS1 and PS2). In terms of processing, N-glycosylation is required for optimal proteolytic activation. Ubiquitinated at Lys-289 by SYNV1/HRD1 via 'Lys-27'-linked ubiquitin.

It is found in the endoplasmic reticulum membrane. The protein localises to the nucleus. Functionally, transcription factor that may act during endoplasmic reticulum stress by activating unfolded protein response target genes. Activated in response to cAMP stimulation. In vitro, binds the cAMP response element (CRE). Activates transcription through box-B element and CRE. Seems to function synergistically with ATF6. In acute inflammatory response, may activate expression of acute phase response (APR) genes. May be involved in growth suppression. Regulates FGF21 transcription. Plays a crucial role in the regulation of triglyceride metabolism and is required for the maintenance of normal plasma triglyceride concentrations. In Bos taurus (Bovine), this protein is Cyclic AMP-responsive element-binding protein 3-like protein 3 (CREB3L3).